A 97-amino-acid polypeptide reads, in one-letter code: Large ribosomal subunit protein eL21 (97 aa).

A disordered region spans residues 1 to 24; that stretch reads MQKSEGFRSKTRYKLQKHPRQKGM. Positions 9–21 are enriched in basic residues; that stretch reads SKTRYKLQKHPRQ.

This sequence belongs to the eukaryotic ribosomal protein eL21 family.

The chain is Large ribosomal subunit protein eL21 from Methanococcus maripaludis (strain DSM 14266 / JCM 13030 / NBRC 101832 / S2 / LL).